A 476-amino-acid chain; its full sequence is UDP-N-acetylmuramate--L-alanine ligase (476 aa).

112–118 provides a ligand contact to ATP; the sequence is GTHGKTT.

It belongs to the MurCDEF family.

The protein localises to the cytoplasm. It catalyses the reaction UDP-N-acetyl-alpha-D-muramate + L-alanine + ATP = UDP-N-acetyl-alpha-D-muramoyl-L-alanine + ADP + phosphate + H(+). It participates in cell wall biogenesis; peptidoglycan biosynthesis. Cell wall formation. This is UDP-N-acetylmuramate--L-alanine ligase from Magnetococcus marinus (strain ATCC BAA-1437 / JCM 17883 / MC-1).